Consider the following 570-residue polypeptide: MSMFCYQCQEAAGGRGCTVKGVCGKTEDIAKTQDLIIYVVKGIAIYSSQAREIGLNTSEADKFIVESLFSTITNANFDAKTLNARVQEGLKIKQSLKDAIIKAGGSYNSKENKSWTSKFLSVLGIKNDKDEKEIHDAAVWAANNPEDFKKKAETVGVLATENEDIRSLRELLTYGLKGMAAYLEHANNLGYDEDSIHAFMEKALVATLDDTLSADELTALVLECGKYGVDVMALLDKANTSTYGNPEITKVNIGVRNNPGILISGHDLKDMEELLKQTEGTGVDVYTHSEMLPANYYPAFKKYKHFVGNYGNAWWKQNEEFEDFNGPILMTTNCIVTPKASYKDRIYTTGVTGFEGVKHINPSKDGKKDFSEIIEHAKRCASPKEIEKGEIIGGFAHNQVLALAPQVVDAVKTGAIKRFFVMAGCDGRMKSRNYYTDFAKELPKDTVILTAGCAKYKYNKLDLGDINGIPRVLDAGQCNDSYSLAVIALKLKEVFELEDINELPISYNIAWYEQKAVIVLLALLHLGVKNIHLGPTLPAFLSPNVAKILVENFGIGTISSVDEDIKMFMN.

Positions 5, 8, 17, and 23 each coordinate [4Fe-4S] cluster. Hybrid [4Fe-2O-2S] cluster is bound by residues histidine 266, glutamate 290, cysteine 334, cysteine 425, cysteine 453, cysteine 478, glutamate 513, and lysine 515. At cysteine 425 the chain carries Cysteine persulfide.

This sequence belongs to the HCP family. Requires [4Fe-4S] cluster as cofactor. The cofactor is hybrid [4Fe-2O-2S] cluster.

The protein resides in the cytoplasm. The enzyme catalyses A + NH4(+) + H2O = hydroxylamine + AH2 + H(+). In terms of biological role, catalyzes the reduction of hydroxylamine to form NH(3) and H(2)O. The sequence is that of Hydroxylamine reductase from Clostridium botulinum (strain Loch Maree / Type A3).